A 204-amino-acid polypeptide reads, in one-letter code: MEFVAHAAAPDSPHSDSGGGGGGMATGATSASAAGASPSRYESQKRRDWNTFGQYLRNHRPPLSLARCSGAHVLEFLRYLDQFGKTKVHAPACPFFGHPAPPAPCPCPLRQAWGSLDALVGRLRAAYEENGGRPENNPFGARAVRLYLREVREHQARARGVSYEKKKRKKPPHPSSAAAAHDDAANGALHHHHHMPPPPPGAAA.

Disordered regions lie at residues 1 to 45 (MEFV…ESQK) and 157 to 204 (RARG…GAAA). Residues 26 to 39 (TGATSASAAGASPS) are compositionally biased toward low complexity. The region spanning 40-167 (RYESQKRRDW…ARGVSYEKKK (128 aa)) is the ALOG domain. Positions 165-169 (KKKRK) match the Nuclear localization signal motif.

It belongs to the plant homeotic and developmental regulators ALOG protein family.

The protein localises to the nucleus. Its function is as follows. Probable transcription regulator that acts as a developmental regulator by promoting cell growth in response to light. This chain is Protein G1-like5 (G1L5), found in Oryza sativa subsp. japonica (Rice).